Here is a 128-residue protein sequence, read N- to C-terminus: Large ribosomal subunit protein bL12 (128 aa).

It belongs to the bacterial ribosomal protein bL12 family. Homodimer. Part of the ribosomal stalk of the 50S ribosomal subunit. Forms a multimeric L10(L12)X complex, where L10 forms an elongated spine to which 2 to 4 L12 dimers bind in a sequential fashion. Binds GTP-bound translation factors.

Forms part of the ribosomal stalk which helps the ribosome interact with GTP-bound translation factors. Is thus essential for accurate translation. This is Large ribosomal subunit protein bL12 from Synechococcus sp. (strain CC9311).